The primary structure comprises 123 residues: Small ribosomal subunit protein uS13 (123 aa).

Residues 97-123 (PVRGQRTHTNAKTRKGRSRLPVAAKKK) form a disordered region.

It belongs to the universal ribosomal protein uS13 family. In terms of assembly, part of the 30S ribosomal subunit. Forms a loose heterodimer with protein S19. Forms two bridges to the 50S subunit in the 70S ribosome.

Located at the top of the head of the 30S subunit, it contacts several helices of the 16S rRNA. In the 70S ribosome it contacts the 23S rRNA (bridge B1a) and protein L5 of the 50S subunit (bridge B1b), connecting the 2 subunits; these bridges are implicated in subunit movement. Contacts the tRNAs in the A and P-sites. In Ehrlichia ruminantium (strain Gardel), this protein is Small ribosomal subunit protein uS13.